The chain runs to 517 residues: MAMAMALRRLSSSIDKPIRPLIRSTSCYMSSLPSEAVDEKERSRVTWPKQLNAPLEEVDPEIADIIEHEKARQWKGLELIPSENFTSVSVMQAVGSVMTNKYSEGYPGARYYGGNEYIDMAETLCQKRALEAFRLDPEKWGVNVQPLSGSPANFHVYTALLKPHERIMALDLPHGGHLSHGYQTDTKKISAVSIFFETMPYRLDESTGYIDYDQMEKSATLFRPKLIVAGASAYARLYDYARIRKVCNKQKAVMLADMAHISGLVAANVIPSPFDYADVVTTTTHKSLRGPRGAMIFFRKGVKEINKQGKEVLYDFEDKINQAVFPGLQGGPHNHTITGLAVALKQATTSEYKAYQEQVLSNSAKFAQTLMERGYELVSGGTDNHLVLVNLKPKGIDGSRVEKVLEAVHIASNKNTVPGDVSAMVPGGIRMGTPALTSRGFVEEDFAKVAEYFDKAVTIALKVKSEAQGTKLKDFVSAMESSSTIQSEIAKLRHEVEEFAKQFPTIGFEKETMKYKN.

Residues 1-30 constitute a mitochondrion transit peptide; the sequence is MAMAMALRRLSSSIDKPIRPLIRSTSCYMS. Residue K286 is modified to N6-(pyridoxal phosphate)lysine.

The protein belongs to the SHMT family. In terms of assembly, homotetramer. Interacts with GLU1. Interacts with UBP16. Pyridoxal 5'-phosphate serves as cofactor. Ubiquitinated. Ubiquitous. Mostly expressed in leaves, less abundant in stems, flowers and siliques, and barely detectable in roots.

Its subcellular location is the mitochondrion. It localises to the cytoplasm. It catalyses the reaction (6R)-5,10-methylene-5,6,7,8-tetrahydrofolate + glycine + H2O = (6S)-5,6,7,8-tetrahydrofolate + L-serine. It functions in the pathway one-carbon metabolism; tetrahydrofolate interconversion. In terms of biological role, functions in the photorespiratory pathway in catalyzing the interconversion of serine and glycine. Involved in controlling cell damage caused by abiotic stress, such as high light and salt and the hypersensitive defense response of plants. This Arabidopsis thaliana (Mouse-ear cress) protein is Serine hydroxymethyltransferase 1, mitochondrial.